Reading from the N-terminus, the 491-residue chain is Probable cysteine proteinase 024R (491 aa).

Residues Cys132, His325, and Asn355 contribute to the active site. The helical transmembrane segment at 467–487 (ALDLALLVLPALLIVIVVLIG) threads the bilayer.

It belongs to the peptidase C1 family.

The protein resides in the membrane. Probable cysteine protease. The chain is Probable cysteine proteinase 024R from Invertebrate iridescent virus 3 (IIV-3).